The primary structure comprises 56 residues: Prokaryotic ubiquitin-like protein UBact (56 aa).

The disordered stretch occupies residues 1–56 (MPERIVKPMPQDPVTKPGDEGPRTPNVPKPDTERLLERMRRVDPRQAQRYRQRSGE). Basic and acidic residues predominate over residues 30-46 (PDTERLLERMRRVDPRQ). E56 participates in a covalent cross-link: Isoglutamyl lysine isopeptide (Glu-Lys) (interchain with K-? in acceptor proteins).

Belongs to the ubiquitin-like protein UBact family.

In terms of biological role, may function as a protein modifier covalently attached to lysine residues of substrate proteins. This may serve to target the modified proteins for degradation by proteasomes. This is Prokaryotic ubiquitin-like protein UBact from Acetithermum autotrophicum.